The chain runs to 495 residues: Membrane-bound lytic murein transglycosylase F (495 aa).

A signal peptide spans 1–29 (MEIRKLSLSTIRSIITSLSVLVLVISASA). The tract at residues 30-273 (TLVRSTPPNV…VTKHFFERHI (244 aa)) is non-LT domain. Positions 274-495 (DEVTTGEAMV…TAAQGENLSL (222 aa)) are LT domain. Glu-320 is a catalytic residue.

It in the N-terminal section; belongs to the bacterial solute-binding protein 3 family. This sequence in the C-terminal section; belongs to the transglycosylase Slt family.

It is found in the cell outer membrane. The catalysed reaction is Exolytic cleavage of the (1-&gt;4)-beta-glycosidic linkage between N-acetylmuramic acid (MurNAc) and N-acetylglucosamine (GlcNAc) residues in peptidoglycan, from either the reducing or the non-reducing ends of the peptidoglycan chains, with concomitant formation of a 1,6-anhydrobond in the MurNAc residue.. Murein-degrading enzyme that degrades murein glycan strands and insoluble, high-molecular weight murein sacculi, with the concomitant formation of a 1,6-anhydromuramoyl product. Lytic transglycosylases (LTs) play an integral role in the metabolism of the peptidoglycan (PG) sacculus. Their lytic action creates space within the PG sacculus to allow for its expansion as well as for the insertion of various structures such as secretion systems and flagella. This chain is Membrane-bound lytic murein transglycosylase F, found in Cellvibrio japonicus (strain Ueda107) (Pseudomonas fluorescens subsp. cellulosa).